The primary structure comprises 284 residues: 2-dehydro-3-deoxyphosphooctonate aldolase (284 aa).

This sequence belongs to the KdsA family.

Its subcellular location is the cytoplasm. The enzyme catalyses D-arabinose 5-phosphate + phosphoenolpyruvate + H2O = 3-deoxy-alpha-D-manno-2-octulosonate-8-phosphate + phosphate. Its pathway is carbohydrate biosynthesis; 3-deoxy-D-manno-octulosonate biosynthesis; 3-deoxy-D-manno-octulosonate from D-ribulose 5-phosphate: step 2/3. It functions in the pathway bacterial outer membrane biogenesis; lipopolysaccharide biosynthesis. This chain is 2-dehydro-3-deoxyphosphooctonate aldolase, found in Yersinia enterocolitica serotype O:8 / biotype 1B (strain NCTC 13174 / 8081).